The sequence spans 465 residues: MYAYNKMGRVPELVICSFIVVTLLVIHFFSDLLRASLGGYYNQDVTLSQLVESQNSDYAWFLKLLVNCFGYSCVFVPGFLIYKYVGRINYLERGNKTFLHKAINMCITGNSGYDQLDAGTSTADKDRPAASTAPKRTSSQEAVQLLWCFGGLMISYLTWGVLQEKIMTQNYLNFTGESAKFKDSQFLVFSNRLLAFLVALAYLQWQPSPVRHRAPLYKYSYASFSNIMSAWFQYEALKFVNFPTQVLAKSCKIIPVMLMGKIMSKAKYESYEYVTALLISLGMIFFMSGSSDSSKASGVTTLTGIFLLSMYMVFDSFTANWQGSLFKSYGMTPLQMMCGVNLFSSIFTGASLSMQGGFMDSLAFATEHPKFVFDMVVLSVCSAVGQLFIYHTIDVFGPVVFTIIMTLRQAVAIMLSCFIYQHSISLLGIFGVLIVFVAIFLRVYCTQRLRAIRKRAEANKPKMAV.

10 consecutive transmembrane segments (helical) span residues 13-33 (LVICSFIVVTLLVIHFFSDLL), 61-81 (FLKLLVNCFGYSCVFVPGFLI), 142-162 (AVQLLWCFGGLMISYLTWGVL), 185-205 (QFLVFSNRLLAFLVALAYLQW), 270-290 (SYEYVTALLISLGMIFFMSGS), 299-319 (VTTLTGIFLLSMYMVFDSFTA), 339-359 (GVNLFSSIFTGASLSMQGGFM), 370-390 (KFVFDMVVLSVCSAVGQLFIY), 391-407 (HTIDVFGPVVFTIIMTL), and 424-444 (ISLLGIFGVLIVFVAIFLRVY).

Belongs to the nucleotide-sugar transporter family. SLC35B subfamily. Expressed throughout embryogenesis. During oogenesis, it is expressed strongly in the nurse cells of the germline. Maternally expressed at the syncytial blastoderm stage. Zygotically expressed, from after germ-band elongation in the invaginating salivary gland placodes. Remains expressed predominantly in this tissue throughout embryogenesis, but low-level expression may also be present throughout the embryo.

It is found in the golgi apparatus membrane. In terms of biological role, mediates the transport of adenosine 3'-phospho 5'-phosphosulfate (PAPS), from cytosol into Golgi. PAPS is a universal sulfuryl donor for sulfation events that take place in the Golgi. Required for the dorsoventral patterning, suggesting that it mediates the transport of the sulfate donor required for the sulfotransferase activity of pip (pipe). This is Adenosine 3'-phospho 5'-phosphosulfate transporter 1 (sll) from Drosophila melanogaster (Fruit fly).